The primary structure comprises 298 residues: Small ribosomal subunit protein uS2 (298 aa).

The segment at 240–298 (AGENWDTQAPGAGVPGSAFAAASAAAATSWEADGGDWAASSAPPAGESWAETQPTEAKW) is disordered. The segment covering 248–271 (APGAGVPGSAFAAASAAAATSWEA) has biased composition (low complexity). The segment covering 289-298 (AETQPTEAKW) has biased composition (polar residues).

It belongs to the universal ribosomal protein uS2 family. As to quaternary structure, component of the small ribosomal subunit. Mature ribosomes consist of a small (40S) and a large (60S) subunit. The 40S subunit contains about 33 different proteins and 1 molecule of RNA (18S). The 60S subunit contains about 49 different proteins and 3 molecules of RNA (25S, 5.8S and 5S). Interacts with rps21.

It localises to the cytoplasm. Functionally, required for the assembly and/or stability of the 40S ribosomal subunit. Required for the processing of the 20S rRNA-precursor to mature 18S rRNA in a late step of the maturation of 40S ribosomal subunits. The protein is Small ribosomal subunit protein uS2 (rps0) of Aspergillus clavatus (strain ATCC 1007 / CBS 513.65 / DSM 816 / NCTC 3887 / NRRL 1 / QM 1276 / 107).